We begin with the raw amino-acid sequence, 557 residues long: Leucine-rich glioma-inactivated protein 1 (557 aa).

The N-terminal stretch at 1 to 34 (MESERSKRMGNACIPLKRIAYFLCLLSALLLTEG) is a signal peptide. An LRRNT domain is found at 35–72 (KKPAKPKCPAVCTCTKDNALCENARSIPRTVPPDVISL). LRR repeat units lie at residues 92 to 113 (SLQL…AFIG), 116 to 137 (HLEY…TFRG), and 140 to 161 (SLIH…IFKG). The region spanning 173–223 (NSFNCDCKLKWLVEWLGHTNATVEDIYCEGPPEYKKRKINSLSSKDFDCII) is the LRRCT domain. An N-linked (GlcNAc...) asparagine glycan is attached at asparagine 192. EAR repeat units follow at residues 225–267 (EFAK…EWDH), 271–313 (TFRN…KRDS), 317–364 (KFIK…KWNG), 366–415 (GFYS…QWNK), 419–462 (LFTN…KWGG), 464–506 (SFQD…NWDA), and 510–552 (KFVK…KHVI). Residue asparagine 277 is glycosylated (N-linked (GlcNAc...) asparagine). Asparagine 422 is a glycosylation site (N-linked (GlcNAc...) asparagine).

In terms of assembly, oligomer. Interacts with KCNA1 within a complex containing KCNA1, KCNA4 and KCNAB1. Part of a complex containing ADAM22, DLG4/PSD95 and CACNG2/Stargazin. Can bind to ADAM11 and ADAM23. In terms of processing, glycosylated. As to expression, predominantly expressed in neural tissues, especially in brain. Expression is reduced in low-grade brain tumors and significantly reduced or absent in malignant gliomas. In terms of tissue distribution, expressed in the occipital cortex and hippocampus; higher amounts are observed in the parietal and frontal cortices, putamen, and, particularly, in the temporal neocortex, where it is between 3 and 5 times more abundant than in the hippocampus (at protein level). Expression is absent in the cerebellum. Abundantly expressed in the occipital cortex and weakly expressed in the hippocampus (at protein level).

It is found in the secreted. The protein resides in the synapse. The protein localises to the cytoplasm. It localises to the golgi apparatus. Its subcellular location is the endoplasmic reticulum. Its function is as follows. Regulates voltage-gated potassium channels assembled from KCNA1, KCNA4 and KCNAB1. It slows down channel inactivation by precluding channel closure mediated by the KCNAB1 subunit. Ligand for ADAM22 that positively regulates synaptic transmission mediated by AMPA-type glutamate receptors. Plays a role in suppressing the production of MMP1/3 through the phosphatidylinositol 3-kinase/ERK pathway. May play a role in the control of neuroblastoma cell survival. The sequence is that of Leucine-rich glioma-inactivated protein 1 (LGI1) from Homo sapiens (Human).